The chain runs to 304 residues: Acetaldehyde dehydrogenase 1 (304 aa).

The active-site Acyl-thioester intermediate is the C131. Residues S162 to N170 and N273 contribute to the NAD(+) site.

This sequence belongs to the acetaldehyde dehydrogenase family.

The catalysed reaction is acetaldehyde + NAD(+) + CoA = acetyl-CoA + NADH + H(+). The protein is Acetaldehyde dehydrogenase 1 of Dechloromonas aromatica (strain RCB).